The chain runs to 506 residues: Maturase K (506 aa).

The protein belongs to the intron maturase 2 family. MatK subfamily.

The protein resides in the plastid. Its subcellular location is the chloroplast. Functionally, usually encoded in the trnK tRNA gene intron. Probably assists in splicing its own and other chloroplast group II introns. The sequence is that of Maturase K from Trifolium spumosum (Mediterranean clover).